A 244-amino-acid polypeptide reads, in one-letter code: tRNA pseudouridine synthase A (244 aa).

Aspartate 52 functions as the Nucleophile in the catalytic mechanism. Tyrosine 110 is a binding site for substrate.

It belongs to the tRNA pseudouridine synthase TruA family. In terms of assembly, homodimer.

The catalysed reaction is uridine(38/39/40) in tRNA = pseudouridine(38/39/40) in tRNA. Its function is as follows. Formation of pseudouridine at positions 38, 39 and 40 in the anticodon stem and loop of transfer RNAs. This is tRNA pseudouridine synthase A from Clostridium kluyveri (strain ATCC 8527 / DSM 555 / NBRC 12016 / NCIMB 10680 / K1).